A 198-amino-acid polypeptide reads, in one-letter code: Ribonuclease HII (198 aa).

The region spanning 5–195 (LRVAGVDEAG…VKAWLASHQG (191 aa)) is the RNase H type-2 domain. Positions 11, 12, and 103 each coordinate a divalent metal cation.

It belongs to the RNase HII family. Mn(2+) is required as a cofactor. Requires Mg(2+) as cofactor.

It is found in the cytoplasm. The enzyme catalyses Endonucleolytic cleavage to 5'-phosphomonoester.. Its function is as follows. Endonuclease that specifically degrades the RNA of RNA-DNA hybrids. The protein is Ribonuclease HII of Chromobacterium violaceum (strain ATCC 12472 / DSM 30191 / JCM 1249 / CCUG 213 / NBRC 12614 / NCIMB 9131 / NCTC 9757 / MK).